A 359-amino-acid chain; its full sequence is D-alanine--D-alanine ligase (359 aa).

The region spanning 141–346 (KRIFKEAGLP…YSTLLDELIN (206 aa)) is the ATP-grasp domain. 172 to 227 (IEHLGYPCFVKPANLGSSVGITKVHNEEELPGALKLAAKYDRKLLIERGIDAREIE) provides a ligand contact to ATP. Residues aspartate 299, glutamate 313, and asparagine 315 each contribute to the Mg(2+) site.

Belongs to the D-alanine--D-alanine ligase family. Requires Mg(2+) as cofactor. Mn(2+) serves as cofactor.

Its subcellular location is the cytoplasm. It catalyses the reaction 2 D-alanine + ATP = D-alanyl-D-alanine + ADP + phosphate + H(+). Its pathway is cell wall biogenesis; peptidoglycan biosynthesis. Functionally, cell wall formation. The protein is D-alanine--D-alanine ligase of Thermoanaerobacter pseudethanolicus (strain ATCC 33223 / 39E) (Clostridium thermohydrosulfuricum).